A 137-amino-acid polypeptide reads, in one-letter code: 15.7 kDa heat shock protein, peroxisomal (137 aa).

One can recognise a sHSP domain in the interval 15 to 134 (QEWSRSTALI…SSKVRNVNIT (120 aa)). The short motif at 135–137 (SKL) is the Microbody targeting signal element.

Belongs to the small heat shock protein (HSP20) family. In terms of assembly, may form oligomeric structures.

The protein resides in the peroxisome. Possesses chaperone activity. In Arabidopsis thaliana (Mouse-ear cress), this protein is 15.7 kDa heat shock protein, peroxisomal (HSP15.7).